The primary structure comprises 361 residues: Phospho-N-acetylmuramoyl-pentapeptide-transferase (361 aa).

Transmembrane regions (helical) follow at residues R25–I45, T73–L93, Y97–Y117, L134–L154, V168–T188, G200–A220, A237–F257, V264–I284, I289–V309, and Q338–L358.

This sequence belongs to the glycosyltransferase 4 family. MraY subfamily. It depends on Mg(2+) as a cofactor.

The protein resides in the cell inner membrane. It catalyses the reaction UDP-N-acetyl-alpha-D-muramoyl-L-alanyl-gamma-D-glutamyl-meso-2,6-diaminopimeloyl-D-alanyl-D-alanine + di-trans,octa-cis-undecaprenyl phosphate = di-trans,octa-cis-undecaprenyl diphospho-N-acetyl-alpha-D-muramoyl-L-alanyl-D-glutamyl-meso-2,6-diaminopimeloyl-D-alanyl-D-alanine + UMP. Its pathway is cell wall biogenesis; peptidoglycan biosynthesis. Functionally, catalyzes the initial step of the lipid cycle reactions in the biosynthesis of the cell wall peptidoglycan: transfers peptidoglycan precursor phospho-MurNAc-pentapeptide from UDP-MurNAc-pentapeptide onto the lipid carrier undecaprenyl phosphate, yielding undecaprenyl-pyrophosphoryl-MurNAc-pentapeptide, known as lipid I. This Nitrosospira multiformis (strain ATCC 25196 / NCIMB 11849 / C 71) protein is Phospho-N-acetylmuramoyl-pentapeptide-transferase.